The chain runs to 260 residues: HTH-type transcriptional activator FapR (260 aa).

Residues 154 to 251 form the HTH araC/xylS-type domain; that stretch reads ERIVTLLFSD…GVTPKKFEIG (98 aa). 2 DNA-binding regions (H-T-H motif) span residues 171 to 192 and 218 to 241; these read SDIAEEMHISEISVRKRLEQEC and IGMIASLVGYTSVSYFIKTFKEYY.

In terms of assembly, homodimer.

Its function is as follows. Positive regulator of the expression of the 987P operon for the fimbrial protein in enterotoxigenic E.coli. This is HTH-type transcriptional activator FapR from Escherichia coli.